Here is a 427-residue protein sequence, read N- to C-terminus: Terminal nucleotidyltransferase 5B (427 aa).

The span at 1–11 shows a compositional bias: acidic residues; it reads MMPSESGDESL. A disordered region spans residues 1–46; that stretch reads MMPSESGDESLEQPAAQVGTGAASAVATAGAAGGGPDLEASSASLG. Over residues 15–30 the composition is skewed to low complexity; it reads AAQVGTGAASAVATAG.

It belongs to the TENT family.

It is found in the cytoplasm. The protein localises to the nucleus. The catalysed reaction is RNA(n) + ATP = RNA(n)-3'-adenine ribonucleotide + diphosphate. Functionally, catalyzes the transfer of one adenosine molecule from an ATP to an mRNA poly(A) tail bearing a 3'-OH terminal group in an ATP hydrolysis-dependent manner. May be involved in maintaining the translation efficiency of at least some genes through preventing degradation of their mRNAs. Prefers RNA molecules that are adenosine-rich close to 3'-end. In addition, may inhibit cell proliferation and cell cycle progression through ubiquitination of beta-catenin/CTNNB1. This chain is Terminal nucleotidyltransferase 5B, found in Rattus norvegicus (Rat).